The primary structure comprises 179 residues: GTP-dependent dephospho-CoA kinase (179 aa).

GTP contacts are provided by aspartate 43, valine 45, aspartate 62, glutamate 120, and aspartate 143.

The protein belongs to the GTP-dependent DPCK family.

The catalysed reaction is 3'-dephospho-CoA + GTP = GDP + CoA + H(+). It participates in cofactor biosynthesis; coenzyme A biosynthesis. In terms of biological role, catalyzes the GTP-dependent phosphorylation of the 3'-hydroxyl group of dephosphocoenzyme A to form coenzyme A (CoA). The protein is GTP-dependent dephospho-CoA kinase of Haloarcula marismortui (strain ATCC 43049 / DSM 3752 / JCM 8966 / VKM B-1809) (Halobacterium marismortui).